We begin with the raw amino-acid sequence, 287 residues long: 4-hydroxybenzoate octaprenyltransferase (287 aa).

A run of 6 helical transmembrane segments spans residues 41–61 (VSLL…GCAI), 92–112 (VALA…LNAL), 133–153 (FFAI…PMAF), 160–180 (VPLL…AYDT), 197–217 (TSAL…YAVT), and 267–287 (NNWL…AQAF).

Belongs to the UbiA prenyltransferase family. It depends on Mg(2+) as a cofactor.

It is found in the cell inner membrane. The enzyme catalyses all-trans-octaprenyl diphosphate + 4-hydroxybenzoate = 4-hydroxy-3-(all-trans-octaprenyl)benzoate + diphosphate. Its pathway is cofactor biosynthesis; ubiquinone biosynthesis. Functionally, catalyzes the prenylation of para-hydroxybenzoate (PHB) with an all-trans polyprenyl group. Mediates the second step in the final reaction sequence of ubiquinone-8 (UQ-8) biosynthesis, which is the condensation of the polyisoprenoid side chain with PHB, generating the first membrane-bound Q intermediate 3-octaprenyl-4-hydroxybenzoate. This Paraburkholderia phymatum (strain DSM 17167 / CIP 108236 / LMG 21445 / STM815) (Burkholderia phymatum) protein is 4-hydroxybenzoate octaprenyltransferase.